Consider the following 107-residue polypeptide: Integration host factor subunit alpha (107 aa).

Belongs to the bacterial histone-like protein family. Heterodimer of an alpha and a beta chain.

Functionally, this protein is one of the two subunits of integration host factor, a specific DNA-binding protein that functions in genetic recombination as well as in transcriptional and translational control. This chain is Integration host factor subunit alpha, found in Brucella suis (strain ATCC 23445 / NCTC 10510).